Here is a 254-residue protein sequence, read N- to C-terminus: Aspartate/glutamate leucyltransferase (254 aa).

Belongs to the R-transferase family. Bpt subfamily.

The protein localises to the cytoplasm. It carries out the reaction N-terminal L-glutamyl-[protein] + L-leucyl-tRNA(Leu) = N-terminal L-leucyl-L-glutamyl-[protein] + tRNA(Leu) + H(+). The enzyme catalyses N-terminal L-aspartyl-[protein] + L-leucyl-tRNA(Leu) = N-terminal L-leucyl-L-aspartyl-[protein] + tRNA(Leu) + H(+). Functions in the N-end rule pathway of protein degradation where it conjugates Leu from its aminoacyl-tRNA to the N-termini of proteins containing an N-terminal aspartate or glutamate. The sequence is that of Aspartate/glutamate leucyltransferase from Mesorhizobium japonicum (strain LMG 29417 / CECT 9101 / MAFF 303099) (Mesorhizobium loti (strain MAFF 303099)).